A 365-amino-acid chain; its full sequence is Outer capsid protein sigma-3 (365 aa).

The CCHC-type zinc-finger motif lies at 51-73 (CMHCLGVVGSLQRKLKHLPHHRC).

The protein belongs to the orthoreovirus sigma-3 protein family. In terms of assembly, heterohexamer of three sigma-3 and three Mu-1 proteins. The RNA-binding form is probably a homodimer. Cleaved during virus the endosomal proteolytic disassembly of the outer capsid.

The protein resides in the virion. It is found in the host cytoplasm. It localises to the host nucleus. Functionally, stimulates translation by blocking the activation of the dsRNA-dependent protein kinase EIF2AK2/PKR, thereby inhibiting the host interferon response. Sigma3 prevents the activation of EIF2AK2 by competing with the kinase for dsRNA-binding. Its function is as follows. The viral outer shell polypeptides, of which sigma-3 is one, impose structural constraints that prevent elongation of nascent transcripts by the RNA-dependent RNA polymerase lambda-3. In Reovirus type 3 (strain Dearing) (T3D), this protein is Outer capsid protein sigma-3 (S4).